The chain runs to 124 residues: Ribonuclease pancreatic (124 aa).

The span at 1 to 13 (KETAAEKFQRQHM) shows a compositional bias: basic and acidic residues. The disordered stretch occupies residues 1–21 (KETAAEKFQRQHMDTSSSLSN). Positions 7 and 10 each coordinate substrate. Histidine 12 functions as the Proton acceptor in the catalytic mechanism. Cystine bridges form between cysteine 26–cysteine 84, cysteine 40–cysteine 95, cysteine 58–cysteine 110, and cysteine 65–cysteine 72. The N-linked (GlcNAc...) asparagine glycan is linked to asparagine 34. Residues 41 to 45 (KPVNT), lysine 66, and arginine 85 contribute to the substrate site. The Proton donor role is filled by histidine 119.

It belongs to the pancreatic ribonuclease family. Monomer. Interacts with and forms tight 1:1 complexes with RNH1. Dimerization of two such complexes may occur. Interaction with RNH1 inhibits this protein. As to expression, pancreas.

It localises to the secreted. It catalyses the reaction an [RNA] containing cytidine + H2O = an [RNA]-3'-cytidine-3'-phosphate + a 5'-hydroxy-ribonucleotide-3'-[RNA].. The enzyme catalyses an [RNA] containing uridine + H2O = an [RNA]-3'-uridine-3'-phosphate + a 5'-hydroxy-ribonucleotide-3'-[RNA].. Functionally, endonuclease that catalyzes the cleavage of RNA on the 3' side of pyrimidine nucleotides. Acts on single-stranded and double-stranded RNA. The polypeptide is Ribonuclease pancreatic (RNASE1) (Hippopotamus amphibius (Hippopotamus)).